A 538-amino-acid polypeptide reads, in one-letter code: MSLSGSDSHLAVSPTLAEDMNSSDTSAGLAETPPADEEKRSIVDTGESVVAMNEPHIVDWDGPDDPGNPVNFSRHIKITNVGIVSALTFITPLASSMFAPGVPQLMEEFHSSSRLLAGFVVSVYVLGFAIGPLILAPASELLGRVPIYHICNICFTVFSIACALSTNLGMLIAFRFFQGCFGSAPVTNGGGTIADLIVQEKRGGVIAIYALGPLLGPVIGPVAGGYLAAARGWRWVFWVLAIVGGGCTLASFLFLRETYPMVLLKRKTQRLIQETGNTHLRSKNDNGMSTRQRFVQAIVRPSRILFRSPIVAASSVYVGIVYGYQYLMFSTFTYVFEDQYAFPTSSAGLTFLGTGVGSLLGLFVIGAVSDRILKAKSKPTPEAPSGAMKPEYRLPPLVWGAFFIPAGLFMYGWSAYYRTHWIVPIIGTGLVGIGNIAVFMCITSYLVDAFTIFAASALAANTVVRSILGALLPMAGQSMYDSMGLGWGNSLLGFIAVVCIPIPWAMMRYGERMREAFDGATIFTIFSGSVSVTRSTFT.

The disordered stretch occupies residues 1 to 42; the sequence is MSLSGSDSHLAVSPTLAEDMNSSDTSAGLAETPPADEEKRSI. N-linked (GlcNAc...) asparagine glycosylation is found at N21 and N71. Transmembrane regions (helical) follow at residues 81 to 101, 115 to 135, 153 to 173, 203 to 223, 235 to 255, 309 to 329, 348 to 368, 394 to 414, 422 to 442, 444 to 464, and 485 to 505; these read VGIVSALTFITPLASSMFAPG, LLAGFVVSVYVLGFAIGPLIL, ICFTVFSIACALSTNLGMLIA, GGVIAIYALGPLLGPVIGPVA, WVFWVLAIVGGGCTLASFLFL, PIVAASSVYVGIVYGYQYLMF, GLTFLGTGVGSLLGLFVIGAV, LPPLVWGAFFIPAGLFMYGWS, IVPIIGTGLVGIGNIAVFMCI, SYLVDAFTIFAASALAANTVV, and LGWGNSLLGFIAVVCIPIPWA.

It belongs to the major facilitator superfamily.

The protein resides in the membrane. Its function is as follows. MFS-type transporter; part of the gene cluster that mediates the biosynthesis of talaronoid C, a fusicoccane diterpenoid with an unprecedented tricyclic 5/8/6 ring system. The protein is MFS-type transporter tndD of Aspergillus flavipes.